Consider the following 419-residue polypeptide: NF-kappa-B essential modulator (419 aa).

Positions methionine 1–glycine 46 are disordered. The tract at residues methionine 1–valine 197 is required for interaction with and ubiquitination by MARCHF2. 4 positions are modified to phosphoserine: serine 31, serine 43, serine 68, and serine 85. The interval glutamate 44–lysine 111 is interaction with CHUK/IKBKB. The stretch at alanine 100–isoleucine 353 forms a coiled coil. Residues lysine 111, lysine 139, lysine 143, lysine 226, lysine 246, and lysine 264 each participate in a glycyl lysine isopeptide (Lys-Gly) (interchain with G-Cter in ubiquitin) cross-link. An interaction with TANK region spans residues leucine 150 to glycine 257. Residues aspartate 242–serine 350 form a ubiquitin-binding (UBAN) region. The segment at lysine 246 to glutamine 365 is self-association. Residues serine 251–glutamate 419 are required for interaction with TNFAIP3. Lysine 277 participates in a covalent cross-link: Glycyl lysine isopeptide (Lys-Gly) (interchain with G-Cter in SUMO); alternate. Lysine 277 is covalently cross-linked (Glycyl lysine isopeptide (Lys-Gly) (interchain with G-Cter in ubiquitin); alternate). Glycyl lysine isopeptide (Lys-Gly) (interchain with G-Cter in ubiquitin) cross-links involve residues lysine 283, lysine 285, lysine 292, and lysine 302. Residue lysine 309 forms a Glycyl lysine isopeptide (Lys-Gly) (interchain with G-Cter in SUMO); alternate linkage. Residue lysine 309 forms a Glycyl lysine isopeptide (Lys-Gly) (interchain with G-Cter in ubiquitin); alternate linkage. The segment at leucine 322–leucine 343 is leucine-zipper. Residue lysine 326 forms a Glycyl lysine isopeptide (Lys-Gly) (interchain with G-Cter in ubiquitin) linkage. Residues valine 363–asparagine 394 form a disordered region. A phosphoserine mark is found at serine 376 and serine 387. The segment at proline 382–glutamate 419 is interaction with CYLD. The CCHC NOA-type zinc-finger motif lies at proline 389–glutamate 419. Cysteine 397 contributes to the Zn(2+) binding site. Residue lysine 399 forms a Glycyl lysine isopeptide (Lys-Gly) (interchain with G-Cter in ubiquitin) linkage. Residues cysteine 400, histidine 413, and cysteine 417 each coordinate Zn(2+).

In terms of assembly, homodimer; disulfide-linked. Component of the I-kappa-B-kinase (IKK) core complex consisting of CHUK, IKBKB and IKBKG; probably four alpha/CHUK-beta/IKBKB dimers are associated with four gamma/IKBKG subunits. The IKK core complex seems to associate with regulatory or adapter proteins to form a IKK-signalosome holo-complex. The IKK complex associates with TERF2IP/RAP1, leading to promote IKK-mediated phosphorylation of RELA/p65. Part of a complex composed of NCOA2, NCOA3, CHUK/IKKA, IKBKB, IKBKG and CREBBP. Interacts with COPS3, CYLD, NALP2, TRPC4AP and PIDD1. Interacts with ATM; the complex is exported from the nucleus. Interacts with TRAF6. Interacts with IKBKE. Interacts with TANK; the interaction is enhanced by IKBKE and TBK1. Part of a ternary complex consisting of TANK, IKBKB and IKBKG. Interacts with ZFAND5. Interacts with RIPK2. Interacts with TNIP1 and TNFAIP3; TNIP1 facilitates the TNFAIP3-mediated de-ubiquitination of IKBKG. Interacts with TNFAIP3; the interaction is induced by TNF stimulation and by polyubiquitin. Binds (via UBAN region) polyubiquitin; binds both 'Lys-63'-linked and linear polyubiquitin, with higher affinity for linear ubiquitin. Interacts with NLRP10. Interacts with TANK; this interaction increases in response to DNA damage. Interacts with USP10; this interaction increases in response to DNA damage. Interacts with ZC3H12A; this interaction increases in response to DNA damage. Interacts with IFIT5; the interaction synergizes the recruitment of IKK to MAP3K7 and enhances IKK phosphorylation. Interacts with TRIM29; this interaction induces IKBKG/NEMO ubiquitination and proteolytic degradation. Interacts with TRIM13; this interaction leads to IKBKG/NEMO ubiquitination. Interacts with ARFIP2. Interacts with RIPK1. Interacts with (ubiquitinated) BCL10; interaction with polyubiquitinated BCL10 via both 'Lys-63'-linked and linear ubiquitin is required for TCR-induced NF-kappa-B activation. Interacts with MARCHF2; during the late stages of macrophage viral and bacterial infection; the interaction leads to ubiquitination and degradation of IKBKG/NEMO. Phosphorylation at Ser-68 attenuates aminoterminal homodimerization. Post-translationally, polyubiquitinated on Lys-285 via 'Lys-63'-linked ubiquitin; the ubiquitination is mediated downstream of NOD2 and RIPK2 and probably plays a role in signaling by facilitating interactions with ubiquitin domain-containing proteins and activates the NF-kappa-B pathway. Polyubiquitinated on Lys-285 and Lys-399 through 'Lys-63'-linked ubiquitin; the ubiquitination is mediated by BCL10, MALT1 and TRAF6 and probably plays a role in signaling by facilitating interactions with ubiquitin domain-containing proteins and activates the NF-kappa-B pathway. Monoubiquitinated on Lys-277 and Lys-309; promotes nuclear export. Polyubiquitinated through 'Lys-27' by TRIM23; involved in antiviral innate and inflammatory responses. Linear polyubiquitinated on Lys-111, Lys-143, Lys-226, Lys-246, Lys-264, Lys-277, Lys-285, Lys-292, Lys-302, Lys-309 and Lys-326; the head-to-tail polyubiquitination is mediated by the LUBAC complex and plays a key role in NF-kappa-B activation. Deubiquitinated by USP10 in a TANK-dependent and -independent manner, leading to the negative regulation of NF-kappa-B signaling upon DNA damage. Ubiquitinated at Lys-326 by MARCHF2 following bacterial and viral infection which leads to its degradation. In terms of processing, sumoylated on Lys-277 and Lys-309 with SUMO1; the modification results in phosphorylation of Ser-85 by ATM leading to a replacement of the sumoylation by mono-ubiquitination on these residues. Neddylated by TRIM40, resulting in stabilization of NFKBIA and down-regulation of NF-kappa-B activity. Post-translationally, (Microbial infection) Cleaved by porcine reproductive and respiratory syndrome virus serine protease nsp4 after Glu-349. The cleavage inhibits NEMO proper function.

The protein localises to the cytoplasm. It localises to the nucleus. In terms of biological role, regulatory subunit of the IKK core complex which phosphorylates inhibitors of NF-kappa-B thus leading to the dissociation of the inhibitor/NF-kappa-B complex and ultimately the degradation of the inhibitor. Its binding to scaffolding polyubiquitin plays a key role in IKK activation by multiple signaling receptor pathways. Can recognize and bind both 'Lys-63'-linked and linear polyubiquitin upon cell stimulation, with a much highr affinity for linear polyubiquitin. Could be implicated in NF-kappa-B-mediated protection from cytokine toxicity. Essential for viral activation of IRF3. Involved in TLR3- and IFIH1-mediated antiviral innate response; this function requires 'Lys-27'-linked polyubiquitination. The polypeptide is NF-kappa-B essential modulator (IKBKG) (Sus scrofa (Pig)).